The chain runs to 141 residues: Hemoglobin subunit alpha-1/2 (141 aa).

One can recognise a Globin domain in the interval 1 to 141; it reads VLSPTDKTNV…VSTVLTSKYR (141 aa). Ser-3 is modified (phosphoserine). At Lys-7 the chain carries N6-succinyllysine. At Thr-8 the chain carries Phosphothreonine. An N6-succinyllysine modification is found at Lys-11. Lys-16 bears the N6-acetyllysine; alternate mark. Lys-16 is subject to N6-succinyllysine; alternate. Position 24 is a phosphotyrosine (Tyr-24). Lys-40 is modified (N6-succinyllysine). Ser-49 bears the Phosphoserine mark. O2 is bound at residue His-58. Heme b is bound at residue His-87. Position 102 is a phosphoserine (Ser-102). Thr-108 carries the phosphothreonine modification. Ser-124 carries the post-translational modification Phosphoserine. Residues Thr-134 and Thr-137 each carry the phosphothreonine modification. Ser-138 is modified (phosphoserine).

Belongs to the globin family. In terms of assembly, heterotetramer of two alpha chains and two beta chains. Red blood cells.

Its function is as follows. Involved in oxygen transport from the lung to the various peripheral tissues. The sequence is that of Hemoglobin subunit alpha-1/2 from Tapirus terrestris (Lowland tapir).